Consider the following 151-residue polypeptide: Desiccation-related protein PCC27-45 (151 aa).

The protein belongs to the LEA type 2 family.

This is Desiccation-related protein PCC27-45 from Craterostigma plantagineum (Blue gem).